The following is a 1452-amino-acid chain: Protein clueless (1452 aa).

Disordered regions lie at residues 1-93 (MALE…SNGH) and 266-288 (KKTR…VSEP). The span at 8–24 (KNSNATATSDATATKAS) shows a compositional bias: low complexity. Residues 42-59 (PIPNSNHQNSNQNLVNGN) are compositionally biased toward polar residues. Positions 68–77 (AKKKGKKNRN) are enriched in basic residues. Ser272 bears the Phosphoserine mark. One can recognise a Clu domain in the interval 426-668 (RAEDAFSSKL…RTFPPDVNFL (243 aa)). Disordered stretches follow at residues 726-775 (KQSE…GDTK), 962-1013 (AVSS…SSVS), and 1414-1452 (ANNN…ATSS). The span at 750 to 766 (GADKTDVKEEKNEENEK) shows a compositional bias: basic and acidic residues. Residues 970–985 (KKRGNGGKHNKHKSSK) show a composition bias toward basic residues. The span at 990 to 1013 (QQQQQATGNQNGSSSGSSNGSSVS) shows a compositional bias: low complexity. The span at 1423 to 1433 (AVPKDVEEQKE) shows a compositional bias: basic and acidic residues.

This sequence belongs to the CLU family.

Its subcellular location is the cytoplasm. MRNA-binding protein involved in proper cytoplasmic distribution of mitochondria. The polypeptide is Protein clueless (Drosophila erecta (Fruit fly)).